The primary structure comprises 513 residues: ATP synthase subunit alpha (513 aa).

An ATP-binding site is contributed by 169 to 176; sequence GDRQTGKT.

The protein belongs to the ATPase alpha/beta chains family. In terms of assembly, F-type ATPases have 2 components, CF(1) - the catalytic core - and CF(0) - the membrane proton channel. CF(1) has five subunits: alpha(3), beta(3), gamma(1), delta(1), epsilon(1). CF(0) has three main subunits: a(1), b(2) and c(9-12). The alpha and beta chains form an alternating ring which encloses part of the gamma chain. CF(1) is attached to CF(0) by a central stalk formed by the gamma and epsilon chains, while a peripheral stalk is formed by the delta and b chains.

The protein localises to the cell inner membrane. The catalysed reaction is ATP + H2O + 4 H(+)(in) = ADP + phosphate + 5 H(+)(out). Functionally, produces ATP from ADP in the presence of a proton gradient across the membrane. The alpha chain is a regulatory subunit. The polypeptide is ATP synthase subunit alpha (Aliivibrio fischeri (strain ATCC 700601 / ES114) (Vibrio fischeri)).